Reading from the N-terminus, the 445-residue chain is MANILQRLPIGEKVGIAFSGGLDTSAALHWMRAKGAVPYAYTANLGQPDESDYEEIPRKAMAYGAEKARLVECRSQLVAEGLAALQCGAFHVSTAGQTYFNTTPLGRAVTGTMLVAAMREDDVNIWGDGSTFKGNDIERFYRYGLLTNPNLRVYKPWLDQQFIDELGGRTEMAEYLIASGFEYKMSVEKAYSTDSNILGATHEAKDLEFLNKGMHIVHPIMGVAFWRDEVKIEKETVTIRFEEGYPVSINGREFGSALELFTEANVIGGRHGLGMSDQIENRIIEAKSRGIYEAPGLALLFIAYERLVTGIHNEDTIEQYRINGKKLGRLLYQGRWLDPQSLMLRESAQRWVAKAVTGEVTVELRRGNDYSIMDTSSANLTYKPERLTMEKGQEYFSPLDRIGQLTMRNLDIIDTRDKLSIYVSAGLLRGSSTTGVPQLPSGSDE.

Residues Ala17 to Ser25 and Ala43 contribute to the ATP site. An L-citrulline-binding site is contributed by Tyr99. Residues Gly129 and Thr131 each coordinate ATP. Residues Thr131, Asn135, and Asp136 each coordinate L-aspartate. Asn135 contacts L-citrulline. ATP is bound at residue Asp136. The L-citrulline site is built by Arg139 and Ser192. Asp194 contacts ATP. 3 residues coordinate L-citrulline: Thr201, Glu203, and Glu280.

This sequence belongs to the argininosuccinate synthase family. Type 2 subfamily. As to quaternary structure, homotetramer.

The protein localises to the cytoplasm. The catalysed reaction is L-citrulline + L-aspartate + ATP = 2-(N(omega)-L-arginino)succinate + AMP + diphosphate + H(+). It functions in the pathway amino-acid biosynthesis; L-arginine biosynthesis; L-arginine from L-ornithine and carbamoyl phosphate: step 2/3. The protein is Argininosuccinate synthase of Gemmatimonas aurantiaca (strain DSM 14586 / JCM 11422 / NBRC 100505 / T-27).